Reading from the N-terminus, the 168-residue chain is CDP-archaeol synthase (168 aa).

5 consecutive transmembrane segments (helical) span residues 7-27 (PLESILAIIPALAANGAPVLL), 55-75 (GLATGILYGSVIALLAASATC), 80-100 (YAAGVFASIGAMLGDMLGAFI), 109-129 (GAPAPLLDQLDFYSGALLALY), and 130-150 (AAGYVVHPAVALTFTPIVIAL).

Belongs to the CDP-archaeol synthase family. Mg(2+) is required as a cofactor.

It is found in the cell membrane. It carries out the reaction 2,3-bis-O-(geranylgeranyl)-sn-glycerol 1-phosphate + CTP + H(+) = CDP-2,3-bis-O-(geranylgeranyl)-sn-glycerol + diphosphate. It participates in membrane lipid metabolism; glycerophospholipid metabolism. Its function is as follows. Catalyzes the formation of CDP-2,3-bis-(O-geranylgeranyl)-sn-glycerol (CDP-archaeol) from 2,3-bis-(O-geranylgeranyl)-sn-glycerol 1-phosphate (DGGGP) and CTP. This reaction is the third ether-bond-formation step in the biosynthesis of archaeal membrane lipids. In Hyperthermus butylicus (strain DSM 5456 / JCM 9403 / PLM1-5), this protein is CDP-archaeol synthase.